Consider the following 181-residue polypeptide: NADH-quinone oxidoreductase subunit B 2 (181 aa).

The [4Fe-4S] cluster site is built by cysteine 44, cysteine 45, cysteine 110, and cysteine 139.

The protein belongs to the complex I 20 kDa subunit family. In terms of assembly, NDH-1 is composed of 14 different subunits. Subunits NuoB, C, D, E, F, and G constitute the peripheral sector of the complex. [4Fe-4S] cluster is required as a cofactor.

It is found in the cell inner membrane. It catalyses the reaction a quinone + NADH + 5 H(+)(in) = a quinol + NAD(+) + 4 H(+)(out). In terms of biological role, NDH-1 shuttles electrons from NADH, via FMN and iron-sulfur (Fe-S) centers, to quinones in the respiratory chain. The immediate electron acceptor for the enzyme in this species is believed to be a menaquinone. Couples the redox reaction to proton translocation (for every two electrons transferred, four hydrogen ions are translocated across the cytoplasmic membrane), and thus conserves the redox energy in a proton gradient. The chain is NADH-quinone oxidoreductase subunit B 2 from Cytophaga hutchinsonii (strain ATCC 33406 / DSM 1761 / CIP 103989 / NBRC 15051 / NCIMB 9469 / D465).